The chain runs to 467 residues: Ribosomal RNA small subunit methyltransferase F (467 aa).

Residues 119–125 (ASAPGSK), E143, D170, and D188 each bind S-adenosyl-L-methionine. C241 acts as the Nucleophile in catalysis.

Belongs to the class I-like SAM-binding methyltransferase superfamily. RsmB/NOP family.

It is found in the cytoplasm. The enzyme catalyses cytidine(1407) in 16S rRNA + S-adenosyl-L-methionine = 5-methylcytidine(1407) in 16S rRNA + S-adenosyl-L-homocysteine + H(+). Functionally, specifically methylates the cytosine at position 1407 (m5C1407) of 16S rRNA. The polypeptide is Ribosomal RNA small subunit methyltransferase F (Shewanella amazonensis (strain ATCC BAA-1098 / SB2B)).